Here is a 1595-residue protein sequence, read N- to C-terminus: DNA-directed RNA polymerase subunit beta'' (1595 aa).

Residues C216, C286, C294, and C297 each contribute to the Zn(2+) site.

Belongs to the RNA polymerase beta' chain family. RpoC2 subfamily. In terms of assembly, in plastids the minimal PEP RNA polymerase catalytic core is composed of four subunits: alpha, beta, beta', and beta''. When a (nuclear-encoded) sigma factor is associated with the core the holoenzyme is formed, which can initiate transcription. It depends on Zn(2+) as a cofactor.

It localises to the plastid. The protein resides in the chloroplast. The enzyme catalyses RNA(n) + a ribonucleoside 5'-triphosphate = RNA(n+1) + diphosphate. Functionally, DNA-dependent RNA polymerase catalyzes the transcription of DNA into RNA using the four ribonucleoside triphosphates as substrates. The chain is DNA-directed RNA polymerase subunit beta'' from Bigelowiella natans (Pedinomonas minutissima).